A 79-amino-acid polypeptide reads, in one-letter code: Ferredoxin oxidoreductase 1 subunit ForD (79 aa).

4Fe-4S ferredoxin-type domains lie at 3–35 and 37–65; these read YVAQ…YTDE and HHAY…RDSI. [4Fe-4S] cluster-binding residues include C12, C17, C20, C24, C46, C49, C52, and C56.

Heterotetramer of one alpha, one beta, one delta and one gamma chain. [4Fe-4S] cluster is required as a cofactor.

The sequence is that of Ferredoxin oxidoreductase 1 subunit ForD (forD1) from Aquifex aeolicus (strain VF5).